The primary structure comprises 126 residues: Small ribosomal subunit protein uS12 (126 aa).

A disordered region spans residues 1–26 (MPTINQLVRKGRASETTKSKSPALQD). A 3-methylthioaspartic acid modification is found at Asp89. The tract at residues 102–126 (LDTQGVKDRRQARSKYGAKRAKAAK) is disordered. Residues 113 to 126 (ARSKYGAKRAKAAK) are compositionally biased toward basic residues.

It belongs to the universal ribosomal protein uS12 family. In terms of assembly, part of the 30S ribosomal subunit. Contacts proteins S8 and S17. May interact with IF1 in the 30S initiation complex.

Functionally, with S4 and S5 plays an important role in translational accuracy. In terms of biological role, interacts with and stabilizes bases of the 16S rRNA that are involved in tRNA selection in the A site and with the mRNA backbone. Located at the interface of the 30S and 50S subunits, it traverses the body of the 30S subunit contacting proteins on the other side and probably holding the rRNA structure together. The combined cluster of proteins S8, S12 and S17 appears to hold together the shoulder and platform of the 30S subunit. The sequence is that of Small ribosomal subunit protein uS12 from Burkholderia mallei (strain ATCC 23344).